Reading from the N-terminus, the 130-residue chain is Small ribosomal subunit protein uS11 (130 aa).

This sequence belongs to the universal ribosomal protein uS11 family. Part of the 30S ribosomal subunit. Interacts with proteins S7 and S18. Binds to IF-3.

Functionally, located on the platform of the 30S subunit, it bridges several disparate RNA helices of the 16S rRNA. Forms part of the Shine-Dalgarno cleft in the 70S ribosome. The polypeptide is Small ribosomal subunit protein uS11 (Xylella fastidiosa (strain M23)).